The following is a 987-amino-acid chain: uncharacterized protein (987 aa).

2 consecutive transmembrane segments (helical) span residues 12 to 32 (FIYLCILLFVFMASMLNSVSG) and 958 to 978 (VENNFEIFLILINVIFGLGIL).

The protein to M.jannaschii MJ1393 and A.fulgidus AF2028.

The protein localises to the cell membrane. This is an uncharacterized protein from Methanocaldococcus jannaschii (strain ATCC 43067 / DSM 2661 / JAL-1 / JCM 10045 / NBRC 100440) (Methanococcus jannaschii).